We begin with the raw amino-acid sequence, 189 residues long: Thioredoxin-like protein CITRX, chloroplastic (189 aa).

A chloroplast-targeting transit peptide spans 1-36 (MAMAAAASLLPACAAPTLPGRAFRPRRNSTPTASLS). The 118-residue stretch at 72–189 (GSGKYIAPDY…MIRNIIDNEL (118 aa)) folds into the Thioredoxin domain. Active-site nucleophile residues include Cys-112 and Cys-115. Cys-112 and Cys-115 form a disulfide bridge.

This sequence belongs to the thioredoxin family. Plant CITRX-type subfamily.

The protein localises to the plastid. Its subcellular location is the chloroplast. In terms of biological role, probable thiol-disulfide oxidoreductase that may play a role in proper chloroplast development. In Oryza sativa subsp. indica (Rice), this protein is Thioredoxin-like protein CITRX, chloroplastic.